Reading from the N-terminus, the 78-residue chain is Metallothionein-like protein type 2 (78 aa).

Belongs to the metallothionein superfamily. Type 15 family.

Functionally, metallothioneins have a high content of cysteine residues that bind various heavy metals. This Musa acuminata (Banana) protein is Metallothionein-like protein type 2.